Consider the following 341-residue polypeptide: Protein pelota homolog (341 aa).

It belongs to the eukaryotic release factor 1 family. Pelota subfamily. Monomer. The cofactor is a divalent metal cation.

It localises to the cytoplasm. Functionally, may function in recognizing stalled ribosomes, interact with stem-loop structures in stalled mRNA molecules, and effect endonucleolytic cleavage of the mRNA. May play a role in the release non-functional ribosomes and degradation of damaged mRNAs. Has endoribonuclease activity. In Methanoculleus marisnigri (strain ATCC 35101 / DSM 1498 / JR1), this protein is Protein pelota homolog.